The chain runs to 146 residues: L-fucose mutarotase (146 aa).

His-22 acts as the Proton donor in catalysis. Substrate is bound by residues Asp-30, Arg-109, and 131–133 (YGN).

Belongs to the RbsD / FucU family. FucU mutarotase subfamily. As to quaternary structure, homodecamer.

It localises to the cytoplasm. It catalyses the reaction alpha-L-fucose = beta-L-fucose. It participates in carbohydrate metabolism; L-fucose metabolism. In terms of biological role, involved in the anomeric conversion of L-fucose. The sequence is that of L-fucose mutarotase from Glaesserella parasuis serovar 5 (strain SH0165) (Haemophilus parasuis).